The primary structure comprises 831 residues: G-type lectin S-receptor-like serine/threonine-protein kinase At1g61390 (831 aa).

An N-terminal signal peptide occupies residues 1–42 (MYKLPQRNCADKQEYTVHMRKMGMVIFACLLLLIIFPTFGYA). The Bulb-type lectin domain occupies 43 to 162 (DINTSSPLSI…VSGKTLWKSF (120 aa)). At 43–448 (DINTSSPLSI…SSELAGSNRT (406 aa)) the chain is on the extracellular side. 4 N-linked (GlcNAc...) asparagine glycosylation sites follow: Asn-45, Asn-71, Asn-106, and Asn-112. The region spanning 298-334 (PTSSCDLYRACGPFGLCVRSRNPKCICLKGFVPKSDD) is the EGF-like; atypical domain. Cystine bridges form between Cys-302-Cys-314 and Cys-308-Cys-322. Asn-340, Asn-356, Asn-399, and Asn-446 each carry an N-linked (GlcNAc...) asparagine glycan. A PAN domain is found at 353 to 439 (CHTNSSTKTQ…GESLSLRLAS (87 aa)). Cystine bridges form between Cys-392–Cys-413 and Cys-396–Cys-402. A helical transmembrane segment spans residues 449–469 (KIILGTTVSLSIFVILVFAAY). Topologically, residues 470-831 (KSWRYRTKQN…EITQSVIQGR (362 aa)) are cytoplasmic. Positions 520–803 (FSSSNKLGQG…ELPSPKQPTF (284 aa)) constitute a Protein kinase domain. ATP-binding positions include 526 to 534 (LGQGGFGPV) and Lys-548. Phosphoserine occurs at positions 554 and 569. The interval 609-626 (TLKFEIDWQKRFNIIQGV) is caM-binding. The active-site Proton acceptor is Asp-645. A phosphoserine mark is found at Ser-649 and Ser-662. At Thr-679 the chain carries Phosphothreonine. Residues Ser-722 and Ser-814 each carry the phosphoserine modification.

Belongs to the protein kinase superfamily. Ser/Thr protein kinase family.

It localises to the cell membrane. The catalysed reaction is L-seryl-[protein] + ATP = O-phospho-L-seryl-[protein] + ADP + H(+). It catalyses the reaction L-threonyl-[protein] + ATP = O-phospho-L-threonyl-[protein] + ADP + H(+). This is G-type lectin S-receptor-like serine/threonine-protein kinase At1g61390 from Arabidopsis thaliana (Mouse-ear cress).